Here is a 456-residue protein sequence, read N- to C-terminus: Phosphomannomutase (456 aa).

Ser-98 acts as the Phosphoserine intermediate in catalysis. Ser-98, Asp-245, Asp-247, and Asp-249 together coordinate Mg(2+).

The protein belongs to the phosphohexose mutase family. It depends on Mg(2+) as a cofactor.

It carries out the reaction alpha-D-mannose 1-phosphate = D-mannose 6-phosphate. It functions in the pathway nucleotide-sugar biosynthesis; GDP-alpha-D-mannose biosynthesis; alpha-D-mannose 1-phosphate from D-fructose 6-phosphate: step 2/2. Functionally, involved in the biosynthesis of the capsular polysaccharide colanic acid. This is Phosphomannomutase (manB) from Escherichia coli (strain K12).